We begin with the raw amino-acid sequence, 330 residues long: 4-hydroxythreonine-4-phosphate dehydrogenase (330 aa).

Residues His136 and Thr137 each contribute to the substrate site. The a divalent metal cation site is built by His166, His211, and His266. The substrate site is built by Lys274, Asn283, and Arg292.

Belongs to the PdxA family. Homodimer. Zn(2+) is required as a cofactor. It depends on Mg(2+) as a cofactor. The cofactor is Co(2+).

The protein localises to the cytoplasm. The catalysed reaction is 4-(phosphooxy)-L-threonine + NAD(+) = 3-amino-2-oxopropyl phosphate + CO2 + NADH. The protein operates within cofactor biosynthesis; pyridoxine 5'-phosphate biosynthesis; pyridoxine 5'-phosphate from D-erythrose 4-phosphate: step 4/5. In terms of biological role, catalyzes the NAD(P)-dependent oxidation of 4-(phosphooxy)-L-threonine (HTP) into 2-amino-3-oxo-4-(phosphooxy)butyric acid which spontaneously decarboxylates to form 3-amino-2-oxopropyl phosphate (AHAP). This is 4-hydroxythreonine-4-phosphate dehydrogenase from Sodalis glossinidius (strain morsitans).